Consider the following 333-residue polypeptide: Plasminogen (333 aa).

In terms of domain architecture, Kringle 5 spans 4–83 (CMFGNGKGYR…LFDYCDVPQC (80 aa)). 9 cysteine pairs are disulfide-bonded: Cys-4/Cys-83, Cys-25/Cys-66, Cys-54/Cys-78, Cys-90/Cys-208, Cys-100/Cys-108, Cys-130/Cys-146, Cys-222/Cys-289, Cys-252/Cys-268, and Cys-279/Cys-307. In terms of domain architecture, Peptidase S1 spans 104–331 (VVGGCVANPH…FVTWIEGIMR (228 aa)). Ser-120 bears the Phosphoserine mark. Residues His-145 and Asp-188 each act as charge relay system in the active site. Ser-283 (charge relay system) is an active-site residue.

It belongs to the peptidase S1 family. Plasminogen subfamily. Interacts with CSPG4 and AMOT. Interacts (via the Kringle domains) with HRG; the interaction tethers PLG to the cell surface and enhances its activation. Interacts (via Kringle 4 domain) with ADA; the interaction stimulates PLG activation when in complex with DPP4. Angiostatin: Interacts with ATP5F1A; the interaction inhibits most of the angiogenic effects of angiostatin.

The protein localises to the secreted. It catalyses the reaction Preferential cleavage: Lys-|-Xaa &gt; Arg-|-Xaa, higher selectivity than trypsin. Converts fibrin into soluble products.. With respect to regulation, converted into plasmin by plasminogen activators, both plasminogen and its activator being bound to fibrin. Activated with urokinase and high concentrations of streptokinase. Its function is as follows. Plasmin dissolves the fibrin of blood clots and acts as a proteolytic factor in a variety of other processes including embryonic development, tissue remodeling, tumor invasion, and inflammation. In ovulation, weakens the walls of the Graafian follicle. It activates the urokinase-type plasminogen activator, collagenases and several complement zymogens, such as C1, C4 and C5. Cleavage of fibronectin and laminin leads to cell detachment and apoptosis. Also cleaves fibrin, thrombospondin and von Willebrand factor. Its role in tissue remodeling and tumor invasion may be modulated by CSPG4. Binds to cells. In Canis lupus familiaris (Dog), this protein is Plasminogen (PLG).